The primary structure comprises 159 residues: MTQLTHFDTAGQAHMVDVGDKASTHRVAVATGTITMQPATFTLVRDGSAKKGDVIGIARVAAIMATKRTADLIPLCHPIGLTKVAVEFALDEATATVACTVRTETRGQTGVEMEALTGVQVALLTIYDMCKAVDRGMVIGNVKLLEKHGGKSGDWVAAG.

Substrate-binding positions include 75-77 (LCH) and 113-114 (ME). Aspartate 128 is an active-site residue.

The protein belongs to the MoaC family. Homohexamer; trimer of dimers.

The catalysed reaction is (8S)-3',8-cyclo-7,8-dihydroguanosine 5'-triphosphate = cyclic pyranopterin phosphate + diphosphate. The protein operates within cofactor biosynthesis; molybdopterin biosynthesis. Functionally, catalyzes the conversion of (8S)-3',8-cyclo-7,8-dihydroguanosine 5'-triphosphate to cyclic pyranopterin monophosphate (cPMP). This is Cyclic pyranopterin monophosphate synthase from Cupriavidus necator (strain ATCC 17699 / DSM 428 / KCTC 22496 / NCIMB 10442 / H16 / Stanier 337) (Ralstonia eutropha).